Here is a 455-residue protein sequence, read N- to C-terminus: Fumarate hydratase class II (455 aa).

Substrate contacts are provided by residues 96–98, 122–125, 132–134, and Thr-180; these read SGT, HPND, and SSN. Residue His-181 is the Proton donor/acceptor of the active site. The active site involves Ser-311. Residues Ser-312 and 317 to 319 contribute to the substrate site; that span reads KVN.

The protein belongs to the class-II fumarase/aspartase family. Fumarase subfamily. Homotetramer.

The protein localises to the cytoplasm. The enzyme catalyses (S)-malate = fumarate + H2O. The protein operates within carbohydrate metabolism; tricarboxylic acid cycle; (S)-malate from fumarate: step 1/1. Its function is as follows. Involved in the TCA cycle. Catalyzes the stereospecific interconversion of fumarate to L-malate. The chain is Fumarate hydratase class II from Listeria monocytogenes serotype 4b (strain F2365).